Reading from the N-terminus, the 500-residue chain is Signal transduction histidine-protein kinase/phosphatase UhpB (500 aa).

8 helical membrane passes run 8-28 (LITVVACFFIFSAAWFCLWSI), 78-98 (VALAHLPLLMIGSVLTLLPVA), 112-132 (LLLQGAALTAAALLQSLPWLG), 140-160 (ALLLTLTGGLTLAPICLVFWH), 185-205 (HLIWYLLLFIVSLWLQLGLPA), 207-224 (LSRFTPFCLALPIIALAW), 231-249 (ALIATLMNAIALIASQTWH), and 253-273 (VDLLLSLLAQSLTGLLLGAGI). Residues 274–500 (QRLRELNQSL…VSVSLPQRYV (227 aa)) lie on the Cytoplasmic side of the membrane. The Histidine kinase domain occupies 311–499 (ELHDDIGQTI…RVSVSLPQRY (189 aa)). His313 carries the post-translational modification Phosphohistidine; by autocatalysis.

In terms of processing, autophosphorylated.

It localises to the cell inner membrane. It carries out the reaction ATP + protein L-histidine = ADP + protein N-phospho-L-histidine.. Functionally, part of the UhpABC signaling cascade that controls the expression of the hexose phosphate transporter UhpT. UhpB functions as a membrane-associated protein kinase that autophosphorylates in response to interaction with UhpC, and subsequently transfers its phosphate group to the response regulator UhpA. Can also dephosphorylate UhpA. This chain is Signal transduction histidine-protein kinase/phosphatase UhpB (uhpB), found in Salmonella typhimurium (strain LT2 / SGSC1412 / ATCC 700720).